Consider the following 376-residue polypeptide: Protein-glutamate methylesterase/protein-glutamine glutaminase (376 aa).

In terms of domain architecture, Response regulatory spans 4–121 (KVLVVDDSSF…ARNRDEAVSL (118 aa)). Asp-55 carries the 4-aspartylphosphate modification. Residues 142–161 (SSQSTSTVESRTATTRTATS) are disordered. The span at 145-161 (STSTVESRTATTRTATS) shows a compositional bias: low complexity. The 194-residue stretch at 183 to 376 (TGKKYQLTAI…ERMLVEVGLK (194 aa)) folds into the CheB-type methylesterase domain. Residues Ser-195, His-222, and Asp-318 contribute to the active site.

Belongs to the CheB family. Post-translationally, phosphorylated by CheA. Phosphorylation of the N-terminal regulatory domain activates the methylesterase activity.

It is found in the cytoplasm. It carries out the reaction [protein]-L-glutamate 5-O-methyl ester + H2O = L-glutamyl-[protein] + methanol + H(+). It catalyses the reaction L-glutaminyl-[protein] + H2O = L-glutamyl-[protein] + NH4(+). Its function is as follows. Involved in chemotaxis. Part of a chemotaxis signal transduction system that modulates chemotaxis in response to various stimuli. Catalyzes the demethylation of specific methylglutamate residues introduced into the chemoreceptors (methyl-accepting chemotaxis proteins or MCP) by CheR. Also mediates the irreversible deamidation of specific glutamine residues to glutamic acid. This Aliivibrio fischeri (strain ATCC 700601 / ES114) (Vibrio fischeri) protein is Protein-glutamate methylesterase/protein-glutamine glutaminase.